We begin with the raw amino-acid sequence, 257 residues long: Global transcriptional regulator CodY (257 aa).

A GAF domain region spans residues 1 to 155 (MSLLSKTREL…AATVIGMEIL (155 aa)). Residues Val-22, Phe-24, Ser-43, Arg-44, Arg-45, and Lys-47 each coordinate GTP. Residues Arg-61, Thr-96, and Phe-98 each coordinate L-isoleucine. Residues Glu-153 and Lys-158 each coordinate GTP. The H-T-H motif DNA-binding region spans 203–222 (ASKVADRVGITRSVIVNALR).

Belongs to the CodY family. Homodimer. Homotetramer. May form homodimers under conditions in which energy sources are sufficient (active state) and homotetramers under insufficient nutrient conditions (inactive state).

The protein resides in the cytoplasm. With respect to regulation, activity of CodY is modulated by interaction with two types of effectors: the branched-chain amino acids (BCAAs) leucine, isoleucine and valine, which are signals of the nutritional status of the cell, and GTP, which may signal the energetic status of the cell. DNA-binding global transcriptional regulator which is involved in the adaptive response to starvation and acts by directly or indirectly controlling the expression of numerous genes in response to nutrient availability. During rapid exponential growth, CodY is highly active and represses genes whose products allow adaptation to nutrient depletion. The polypeptide is Global transcriptional regulator CodY (Staphylococcus aureus (strain Mu3 / ATCC 700698)).